Reading from the N-terminus, the 238-residue chain is Probable transcriptional regulatory protein SERP0322 (238 aa).

It belongs to the TACO1 family. YeeN subfamily.

Its subcellular location is the cytoplasm. The protein is Probable transcriptional regulatory protein SERP0322 of Staphylococcus epidermidis (strain ATCC 35984 / DSM 28319 / BCRC 17069 / CCUG 31568 / BM 3577 / RP62A).